The sequence spans 356 residues: MRVTDFSFELPESLIAHYPMPERSSCRLLSLDGPTGALTHGTFTDLLDKLNPGDLLVFNNTRVIPARLFGRKASGGKIEVLVERMLDDKRILAHIRASKAPKPGAELLLGDDESINATMTARHGALFEVEFNDDRSVLDILNSIGHMPLPPYIDRPDEDADRELYQTVYSEKPGAVAAPTAGLHFDEPLLEKLRAKGVEMAFVTLHVGAGTFQPVRVDTIEDHIMHSEYAEVPQDVVDAVLAAKARGNRVIAVGTTSVRSLESAAQAAKNDLIEPFFDDTQIFIYPGFQYKVVDALVTNFHLPESTLIMLVSAFAGYQHTMNAYKAAVEEKYRFFSYGDAMFITYNPQAINERVGE.

The protein belongs to the QueA family. In terms of assembly, monomer.

The protein resides in the cytoplasm. The enzyme catalyses 7-aminomethyl-7-carbaguanosine(34) in tRNA + S-adenosyl-L-methionine = epoxyqueuosine(34) in tRNA + adenine + L-methionine + 2 H(+). It functions in the pathway tRNA modification; tRNA-queuosine biosynthesis. In terms of biological role, transfers and isomerizes the ribose moiety from AdoMet to the 7-aminomethyl group of 7-deazaguanine (preQ1-tRNA) to give epoxyqueuosine (oQ-tRNA). The polypeptide is S-adenosylmethionine:tRNA ribosyltransferase-isomerase (Escherichia coli (strain 55989 / EAEC)).